Reading from the N-terminus, the 168-residue chain is MPRSRINGNFIDKTFSIVANILLRIIPTTSGEKEAFTYYRDGMSAQSEGNYAEALQNYYEAMRLEIDPYDRSYILYNIGLIHTSNGEHTKALEYYFRALERNPFLPQAFNNMAVICHYRGEQAIRQGDSEIAEAWFDQAAEYWKQAMALTPGNYIEAHNWLKITRRFE.

3 TPR repeats span residues 35 to 68 (AFTY…EIDP), 72 to 105 (SYIL…NPFL), and 120 to 153 (GEQA…TPGN).

It belongs to the Ycf3 family.

It localises to the plastid. The protein resides in the chloroplast thylakoid membrane. In terms of biological role, essential for the assembly of the photosystem I (PSI) complex. May act as a chaperone-like factor to guide the assembly of the PSI subunits. This is Photosystem I assembly protein Ycf3 from Panax ginseng (Korean ginseng).